Reading from the N-terminus, the 333-residue chain is NADH-ubiquinone oxidoreductase chain 2 (333 aa).

Transmembrane regions (helical) follow at residues 10-30, 57-77, 91-111, 121-141, 143-163, 170-190, 192-212, 242-262, 267-287, and 313-333; these read WFIY…NIFI, LIYY…IIVY, FMVQ…FWMI, QIFL…VSMT, INSW…FYAN, KLLA…LELN, NMFI…ISFL, MYPI…MVSV, WILF…IIIL, and SYFA…LNFL.

The protein belongs to the complex I subunit 2 family.

It localises to the mitochondrion inner membrane. The enzyme catalyses a ubiquinone + NADH + 5 H(+)(in) = a ubiquinol + NAD(+) + 4 H(+)(out). Core subunit of the mitochondrial membrane respiratory chain NADH dehydrogenase (Complex I) that is believed to belong to the minimal assembly required for catalysis. Complex I functions in the transfer of electrons from NADH to the respiratory chain. The immediate electron acceptor for the enzyme is believed to be ubiquinone. This chain is NADH-ubiquinone oxidoreductase chain 2 (ND2), found in Apis mellifera ligustica (Common honeybee).